Reading from the N-terminus, the 210-residue chain is 3-hexulose-6-phosphate synthase (210 aa).

The protein belongs to the HPS/KGPDC family. HPS subfamily.

It carries out the reaction D-ribulose 5-phosphate + formaldehyde = D-arabino-hex-3-ulose 6-phosphate. It participates in one-carbon metabolism; formaldehyde assimilation via RuMP pathway; D-fructose 6-phosphate from D-ribulose 5-phosphate and formaldehyde: step 1/2. In terms of biological role, catalyzes the condensation of ribulose 5-phosphate with formaldehyde to form 3-hexulose 6-phosphate. The sequence is that of 3-hexulose-6-phosphate synthase from Staphylococcus epidermidis (strain ATCC 35984 / DSM 28319 / BCRC 17069 / CCUG 31568 / BM 3577 / RP62A).